Reading from the N-terminus, the 356-residue chain is Holliday junction branch migration complex subunit RuvB (356 aa).

The interval 4–192 (DDTTDATADE…FGFTAHMEFY (189 aa)) is large ATPase domain (RuvB-L). Residues leucine 31, arginine 32, glycine 73, lysine 76, threonine 77, threonine 78, 139–141 (EDF), arginine 182, tyrosine 192, and arginine 229 each bind ATP. Residue threonine 77 participates in Mg(2+) binding. The tract at residues 193-263 (EPHELERVIH…IAAAALKVYE (71 aa)) is small ATPAse domain (RuvB-S). The tract at residues 266–356 (ARGLDRLDRG…GNGQGDLFGA (91 aa)) is head domain (RuvB-H). Residues arginine 302, arginine 321, and arginine 326 each coordinate DNA.

The protein belongs to the RuvB family. In terms of assembly, homohexamer. Forms an RuvA(8)-RuvB(12)-Holliday junction (HJ) complex. HJ DNA is sandwiched between 2 RuvA tetramers; dsDNA enters through RuvA and exits via RuvB. An RuvB hexamer assembles on each DNA strand where it exits the tetramer. Each RuvB hexamer is contacted by two RuvA subunits (via domain III) on 2 adjacent RuvB subunits; this complex drives branch migration. In the full resolvosome a probable DNA-RuvA(4)-RuvB(12)-RuvC(2) complex forms which resolves the HJ.

It is found in the cytoplasm. The catalysed reaction is ATP + H2O = ADP + phosphate + H(+). Functionally, the RuvA-RuvB-RuvC complex processes Holliday junction (HJ) DNA during genetic recombination and DNA repair, while the RuvA-RuvB complex plays an important role in the rescue of blocked DNA replication forks via replication fork reversal (RFR). RuvA specifically binds to HJ cruciform DNA, conferring on it an open structure. The RuvB hexamer acts as an ATP-dependent pump, pulling dsDNA into and through the RuvAB complex. RuvB forms 2 homohexamers on either side of HJ DNA bound by 1 or 2 RuvA tetramers; 4 subunits per hexamer contact DNA at a time. Coordinated motions by a converter formed by DNA-disengaged RuvB subunits stimulates ATP hydrolysis and nucleotide exchange. Immobilization of the converter enables RuvB to convert the ATP-contained energy into a lever motion, pulling 2 nucleotides of DNA out of the RuvA tetramer per ATP hydrolyzed, thus driving DNA branch migration. The RuvB motors rotate together with the DNA substrate, which together with the progressing nucleotide cycle form the mechanistic basis for DNA recombination by continuous HJ branch migration. Branch migration allows RuvC to scan DNA until it finds its consensus sequence, where it cleaves and resolves cruciform DNA. The sequence is that of Holliday junction branch migration complex subunit RuvB from Streptomyces avermitilis (strain ATCC 31267 / DSM 46492 / JCM 5070 / NBRC 14893 / NCIMB 12804 / NRRL 8165 / MA-4680).